We begin with the raw amino-acid sequence, 122 residues long: Large ribosomal subunit protein uL14 (122 aa).

This sequence belongs to the universal ribosomal protein uL14 family. As to quaternary structure, part of the 50S ribosomal subunit. Forms a cluster with proteins L3 and L19. In the 70S ribosome, L14 and L19 interact and together make contacts with the 16S rRNA in bridges B5 and B8.

Its function is as follows. Binds to 23S rRNA. Forms part of two intersubunit bridges in the 70S ribosome. The chain is Large ribosomal subunit protein uL14 from Syntrophotalea carbinolica (strain DSM 2380 / NBRC 103641 / GraBd1) (Pelobacter carbinolicus).